Here is a 297-residue protein sequence, read N- to C-terminus: HTH-type transcriptional regulator ArgP (297 aa).

Residues 4 to 60 (PDYRTLQALDAVIRERGFERAAQKLCITQSAVSQRIKQLENLFGQPLLVRTVPPRPT) enclose the HTH lysR-type domain. The H-T-H motif DNA-binding region spans 21–40 (FERAAQKLCITQSAVSQRIK).

The protein belongs to the LysR transcriptional regulatory family. In terms of assembly, homodimer.

Functionally, controls the transcription of genes involved in arginine and lysine metabolism. This chain is HTH-type transcriptional regulator ArgP, found in Serratia proteamaculans (strain 568).